Consider the following 477-residue polypeptide: Ribulose bisphosphate carboxylase large chain (477 aa).

Residues 1 to 2 (MS) constitute a propeptide that is removed on maturation. An N-acetylproline modification is found at P3. Substrate-binding residues include N123 and T173. The active-site Proton acceptor is K175. K177 lines the substrate pocket. 3 residues coordinate Mg(2+): K201, D203, and E204. K201 carries the post-translational modification N6-carboxylysine. The active-site Proton acceptor is the H294. Substrate is bound by residues R295, H327, and S379.

It belongs to the RuBisCO large chain family. Type I subfamily. Heterohexadecamer of 8 large chains and 8 small chains; disulfide-linked. The disulfide link is formed within the large subunit homodimers. Requires Mg(2+) as cofactor. In terms of processing, the disulfide bond which can form in the large chain dimeric partners within the hexadecamer appears to be associated with oxidative stress and protein turnover.

Its subcellular location is the plastid. The protein localises to the chloroplast. It catalyses the reaction 2 (2R)-3-phosphoglycerate + 2 H(+) = D-ribulose 1,5-bisphosphate + CO2 + H2O. It carries out the reaction D-ribulose 1,5-bisphosphate + O2 = 2-phosphoglycolate + (2R)-3-phosphoglycerate + 2 H(+). In terms of biological role, ruBisCO catalyzes two reactions: the carboxylation of D-ribulose 1,5-bisphosphate, the primary event in carbon dioxide fixation, as well as the oxidative fragmentation of the pentose substrate in the photorespiration process. Both reactions occur simultaneously and in competition at the same active site. The chain is Ribulose bisphosphate carboxylase large chain from Lolium perenne (Perennial ryegrass).